The sequence spans 465 residues: UDP-N-acetylmuramoylalanine--D-glutamate ligase (465 aa).

An ATP-binding site is contributed by 127–133 (GSNGKST).

It belongs to the MurCDEF family.

The protein localises to the cytoplasm. It carries out the reaction UDP-N-acetyl-alpha-D-muramoyl-L-alanine + D-glutamate + ATP = UDP-N-acetyl-alpha-D-muramoyl-L-alanyl-D-glutamate + ADP + phosphate + H(+). Its pathway is cell wall biogenesis; peptidoglycan biosynthesis. Cell wall formation. Catalyzes the addition of glutamate to the nucleotide precursor UDP-N-acetylmuramoyl-L-alanine (UMA). This Cereibacter sphaeroides (strain ATCC 17025 / ATH 2.4.3) (Rhodobacter sphaeroides) protein is UDP-N-acetylmuramoylalanine--D-glutamate ligase.